The sequence spans 329 residues: Pantothenate kinase (329 aa).

Residues 1 to 22 (MPAQGPSHGELPPADAGRESSP) are disordered. ATP is bound at residue 107–114 (GSVAVGKS).

This sequence belongs to the prokaryotic pantothenate kinase family.

Its subcellular location is the cytoplasm. It carries out the reaction (R)-pantothenate + ATP = (R)-4'-phosphopantothenate + ADP + H(+). The protein operates within cofactor biosynthesis; coenzyme A biosynthesis; CoA from (R)-pantothenate: step 1/5. The chain is Pantothenate kinase from Nocardioides sp. (strain ATCC BAA-499 / JS614).